The sequence spans 418 residues: 3-isopropylmalate dehydratase large subunit 1 (418 aa).

Positions 298, 358, and 361 each coordinate [4Fe-4S] cluster.

This sequence belongs to the aconitase/IPM isomerase family. LeuC type 2 subfamily. Heterodimer of LeuC and LeuD. It depends on [4Fe-4S] cluster as a cofactor.

The catalysed reaction is (2R,3S)-3-isopropylmalate = (2S)-2-isopropylmalate. It functions in the pathway amino-acid biosynthesis; L-leucine biosynthesis; L-leucine from 3-methyl-2-oxobutanoate: step 2/4. In terms of biological role, catalyzes the isomerization between 2-isopropylmalate and 3-isopropylmalate, via the formation of 2-isopropylmaleate. In Archaeoglobus fulgidus (strain ATCC 49558 / DSM 4304 / JCM 9628 / NBRC 100126 / VC-16), this protein is 3-isopropylmalate dehydratase large subunit 1.